Consider the following 329-residue polypeptide: Biotin synthase (329 aa).

In terms of domain architecture, Radical SAM core spans 38 to 262 (NTIQVSTLLS…IMPHSYIRLS (225 aa)). Cys53, Cys57, and Cys60 together coordinate [4Fe-4S] cluster. [2Fe-2S] cluster contacts are provided by Cys97, Cys128, Cys188, and Arg260.

Belongs to the radical SAM superfamily. Biotin synthase family. As to quaternary structure, homodimer. [4Fe-4S] cluster serves as cofactor. It depends on [2Fe-2S] cluster as a cofactor.

It carries out the reaction (4R,5S)-dethiobiotin + (sulfur carrier)-SH + 2 reduced [2Fe-2S]-[ferredoxin] + 2 S-adenosyl-L-methionine = (sulfur carrier)-H + biotin + 2 5'-deoxyadenosine + 2 L-methionine + 2 oxidized [2Fe-2S]-[ferredoxin]. Its pathway is cofactor biosynthesis; biotin biosynthesis; biotin from 7,8-diaminononanoate: step 2/2. Catalyzes the conversion of dethiobiotin (DTB) to biotin by the insertion of a sulfur atom into dethiobiotin via a radical-based mechanism. The polypeptide is Biotin synthase (Acinetobacter baumannii (strain SDF)).